The following is a 308-amino-acid chain: Ribosomal RNA small subunit methyltransferase A (308 aa).

6 residues coordinate S-adenosyl-L-methionine: N35, V37, G62, E83, D113, and N136.

This sequence belongs to the class I-like SAM-binding methyltransferase superfamily. rRNA adenine N(6)-methyltransferase family. RsmA subfamily.

Its subcellular location is the cytoplasm. The catalysed reaction is adenosine(1518)/adenosine(1519) in 16S rRNA + 4 S-adenosyl-L-methionine = N(6)-dimethyladenosine(1518)/N(6)-dimethyladenosine(1519) in 16S rRNA + 4 S-adenosyl-L-homocysteine + 4 H(+). Functionally, specifically dimethylates two adjacent adenosines (A1518 and A1519) in the loop of a conserved hairpin near the 3'-end of 16S rRNA in the 30S particle. May play a critical role in biogenesis of 30S subunits. The chain is Ribosomal RNA small subunit methyltransferase A from Bifidobacterium longum (strain NCC 2705).